Reading from the N-terminus, the 126-residue chain is uncharacterized protein (126 aa).

The chain crosses the membrane as a helical span at residues 55–77 (MLLINSNLVLSGLLLFIDVYRAA).

The protein localises to the membrane. This is an uncharacterized protein from Dictyostelium discoideum (Social amoeba).